The chain runs to 423 residues: MTEPALSSANNALMQKLTGRQLFDKIGRPTRIVAPMVDQSELAWRILSRRYGATLAYTPMLHAKLFATSKKYREDNWSSLDGSSVDRPLVVQFCANDPEYLLAAAKLVEDKCDAVDLNLGCPQGIAKKGHYGSFLMEEWDLIHNLINTLHKNLKVPVTAKIRIFDDCEKSLNYAKMVLDAGAQFLTVHGRVREQKGQKTGLANWETIKYLRDNLPKETVFFANGNILYPEDISRCMEHIGADAVMSAEGNLYNPGVFNVGQTKNKEKIFPRVDKIIREYFQIVKECQESKASKTAMKSHFFKILRPFLPHHTDIRSTLATMNAKATWEEWEEQVVKPVEKVVQEIFEQPDIAIKDEITIGEKQSWGGSYRTVPYWRCQPYFRPVNGITGDKRVMQGLIDESVNKKRKADVPLESADKKKDVKA.

N-acetylthreonine is present on Thr-2. Residues 35 to 37 and Gln-92 contribute to the FMN site; that span reads PMV. Cys-121 (proton donor) is an active-site residue. FMN is bound by residues Lys-160, His-188, 223–225, and 247–248; these read NGN and AE. The interval 404 to 423 is disordered; that stretch reads KKRKADVPLESADKKKDVKA. A compositionally biased stretch (basic and acidic residues) spans 408 to 423; sequence ADVPLESADKKKDVKA.

Belongs to the Dus family. Dus1 subfamily. As to quaternary structure, monomer. FMN serves as cofactor.

The enzyme catalyses 5,6-dihydrouridine(16) in tRNA + NADP(+) = uridine(16) in tRNA + NADPH + H(+). It catalyses the reaction 5,6-dihydrouridine(16) in tRNA + NAD(+) = uridine(16) in tRNA + NADH + H(+). The catalysed reaction is 5,6-dihydrouridine(17) in tRNA + NAD(+) = uridine(17) in tRNA + NADH + H(+). It carries out the reaction 5,6-dihydrouridine(17) in tRNA + NADP(+) = uridine(17) in tRNA + NADPH + H(+). The enzyme catalyses a 5,6-dihydrouridine in mRNA + NAD(+) = a uridine in mRNA + NADH + H(+). It catalyses the reaction a 5,6-dihydrouridine in mRNA + NADP(+) = a uridine in mRNA + NADPH + H(+). Functionally, catalyzes the synthesis of dihydrouridine, a modified base found in the D-loop of most tRNAs. Specifically modifies U16 and U17 in cytoplasmic tRNAs. Also able to mediate dihydrouridylation of some mRNAs, thereby affecting their translation. The protein is tRNA-dihydrouridine(16/17) synthase [NAD(P)(+)] of Saccharomyces cerevisiae (strain ATCC 204508 / S288c) (Baker's yeast).